Consider the following 197-residue polypeptide: dTTP/UTP pyrophosphatase (197 aa).

Aspartate 70 serves as the catalytic Proton acceptor.

It belongs to the Maf family. YhdE subfamily. Requires a divalent metal cation as cofactor.

Its subcellular location is the cytoplasm. The enzyme catalyses dTTP + H2O = dTMP + diphosphate + H(+). It carries out the reaction UTP + H2O = UMP + diphosphate + H(+). Its function is as follows. Nucleoside triphosphate pyrophosphatase that hydrolyzes dTTP and UTP. May have a dual role in cell division arrest and in preventing the incorporation of modified nucleotides into cellular nucleic acids. The sequence is that of dTTP/UTP pyrophosphatase (yceF2) from Shigella boydii serotype 4 (strain Sb227).